We begin with the raw amino-acid sequence, 124 residues long: Fluoride-specific ion channel FluC (124 aa).

The next 4 helical transmembrane spans lie at 6–26 (FAVA…ATWV), 34–54 (FYLA…YLYA), 69–89 (ALII…LDAL), and 101–121 (FAYV…GLAL). 2 residues coordinate Na(+): glycine 76 and threonine 79.

The protein belongs to the fluoride channel Fluc/FEX (TC 1.A.43) family.

Its subcellular location is the cell inner membrane. The catalysed reaction is fluoride(in) = fluoride(out). Na(+) is not transported, but it plays an essential structural role and its presence is essential for fluoride channel function. Its function is as follows. Fluoride-specific ion channel. Important for reducing fluoride concentration in the cell, thus reducing its toxicity. The sequence is that of Fluoride-specific ion channel FluC from Stutzerimonas stutzeri (strain A1501) (Pseudomonas stutzeri).